A 212-amino-acid polypeptide reads, in one-letter code: Shuttling pre-60S factor ECM1 (212 aa).

Disordered stretches follow at residues 28-48 (KISK…EVKD) and 188-212 (SLAE…DVEE). Residue serine 188 is modified to Phosphoserine. Polar residues predominate over residues 191–201 (EDNTVQKTPTN).

Belongs to the ECM1 family. Associates with the pre-60S ribosomal particle and the nucleopore complex.

Its subcellular location is the nucleus. It is found in the nucleolus. It localises to the cytoplasm. In terms of biological role, pre-ribosomal factor involved in 60S ribosomal protein subunit export from the nucleus. This Saccharomyces cerevisiae (strain ATCC 204508 / S288c) (Baker's yeast) protein is Shuttling pre-60S factor ECM1 (ECM1).